Here is a 380-residue protein sequence, read N- to C-terminus: Endopolygalacturonase AN8327 (380 aa).

Residues 1–19 (MFYALGPLALFAFATEVMA) form the signal peptide. The propeptide occupies 20-35 (TPVAYPMTTASPTLAK). Cysteine 39 and cysteine 57 form a disulfide bridge. 7 PbH1 repeats span residues 147 to 169 (LTDS…SING), 170 to 200 (CDGL…DIGE), 201 to 222 (SSNV…AVNS), 223 to 243 (GTSI…SIGS), 252 to 273 (VDTV…RIKA), 281 to 303 (IKGV…LIEQ), and 315 to 338 (TSGI…DSDG). The active-site Proton donor is the aspartate 215. Cysteines 217 and 233 form a disulfide. Histidine 237 is a catalytic residue. Asparagine 327 carries N-linked (GlcNAc...) asparagine glycosylation. Residues cysteine 345 and cysteine 350 are joined by a disulfide bond. Asparagine 352 carries an N-linked (GlcNAc...) asparagine glycan. An intrachain disulfide couples cysteine 369 to cysteine 378.

This sequence belongs to the glycosyl hydrolase 28 family.

It localises to the secreted. It catalyses the reaction (1,4-alpha-D-galacturonosyl)n+m + H2O = (1,4-alpha-D-galacturonosyl)n + (1,4-alpha-D-galacturonosyl)m.. In terms of biological role, involved in maceration and soft-rotting of plant tissue. Hydrolyzes the 1,4-alpha glycosidic bonds of de-esterified pectate in the smooth region of the plant cell wall. The sequence is that of Endopolygalacturonase AN8327 from Emericella nidulans (strain FGSC A4 / ATCC 38163 / CBS 112.46 / NRRL 194 / M139) (Aspergillus nidulans).